The following is a 344-amino-acid chain: Dihydroorotase (344 aa).

Positions 13 and 15 each coordinate Zn(2+). Residues 15 to 17 and Asn41 contribute to the substrate site; that span reads HFR. 3 residues coordinate Zn(2+): Lys98, His135, and His173. An N6-carboxylysine modification is found at Lys98. His135 provides a ligand contact to substrate. Position 218 (Leu218) interacts with substrate. Asp246 contacts Zn(2+). Asp246 is a catalytic residue. 2 residues coordinate substrate: His250 and Ala262.

Belongs to the metallo-dependent hydrolases superfamily. DHOase family. Class II DHOase subfamily. In terms of assembly, homodimer. The cofactor is Zn(2+).

The catalysed reaction is (S)-dihydroorotate + H2O = N-carbamoyl-L-aspartate + H(+). It functions in the pathway pyrimidine metabolism; UMP biosynthesis via de novo pathway; (S)-dihydroorotate from bicarbonate: step 3/3. Functionally, catalyzes the reversible cyclization of carbamoyl aspartate to dihydroorotate. The sequence is that of Dihydroorotase from Pseudoalteromonas atlantica (strain T6c / ATCC BAA-1087).